Here is a 456-residue protein sequence, read N- to C-terminus: Enolase (456 aa).

Gln164 serves as a coordination point for (2R)-2-phosphoglycerate. Residue Glu207 is the Proton donor of the active site. Residues Asp244, Glu287, and Asp314 each contribute to the Mg(2+) site. Positions 339, 368, 369, and 390 each coordinate (2R)-2-phosphoglycerate. Catalysis depends on Lys339, which acts as the Proton acceptor.

It belongs to the enolase family. As to quaternary structure, component of the RNA degradosome, a multiprotein complex involved in RNA processing and mRNA degradation. Mg(2+) is required as a cofactor.

The protein resides in the cytoplasm. The protein localises to the secreted. It localises to the cell surface. The catalysed reaction is (2R)-2-phosphoglycerate = phosphoenolpyruvate + H2O. It participates in carbohydrate degradation; glycolysis; pyruvate from D-glyceraldehyde 3-phosphate: step 4/5. Functionally, catalyzes the reversible conversion of 2-phosphoglycerate (2-PG) into phosphoenolpyruvate (PEP). It is essential for the degradation of carbohydrates via glycolysis. This Francisella tularensis subsp. holarctica (strain LVS) protein is Enolase.